Here is a 234-residue protein sequence, read N- to C-terminus: Small ribosomal subunit protein uS5 (234 aa).

Residues 1–10 (MEDIKTTTPE) show a composition bias toward polar residues. The tract at residues 1–69 (MEDIKTTTPE…KDGSGNKPNK (69 aa)) is disordered. Positions 11–31 (VKNEENKTSEVKEGKALEKNN) are enriched in basic and acidic residues. One can recognise an S5 DRBM domain in the interval 78–141 (LEEKIVGVKK…KSAKNNMYKV (64 aa)).

This sequence belongs to the universal ribosomal protein uS5 family. Part of the 30S ribosomal subunit. Contacts proteins S4 and S8.

With S4 and S12 plays an important role in translational accuracy. Its function is as follows. Located at the back of the 30S subunit body where it stabilizes the conformation of the head with respect to the body. This is Small ribosomal subunit protein uS5 from Malacoplasma penetrans (strain HF-2) (Mycoplasma penetrans).